The sequence spans 229 residues: NADH dehydrogenase [ubiquinone] iron-sulfur protein 8, mitochondrial (229 aa).

The N-terminal 41 residues, 1 to 41 (MAAILARKSLSALRSRQLVLAGHTIEGTNGYNRTLLGTRSF), are a transit peptide targeting the mitochondrion. 2 4Fe-4S ferredoxin-type domains span residues 121 to 150 (RRYA…IEAE) and 160 to 189 (TRYD…EGPN). 8 residues coordinate [4Fe-4S] cluster: Cys-130, Cys-133, Cys-136, Cys-140, Cys-169, Cys-172, Cys-175, and Cys-179.

It belongs to the complex I 23 kDa subunit family. As to quaternary structure, complex I is composed of about 45 different subunits. This is a component of the iron-sulfur (IP) fragment of the enzyme. [4Fe-4S] cluster is required as a cofactor. As to expression, lowest expression found in storage tissues of tubers. Higher expression in older leaves than younger ones. Highest expression found in flowers.

It is found in the mitochondrion inner membrane. The catalysed reaction is a ubiquinone + NADH + 5 H(+)(in) = a ubiquinol + NAD(+) + 4 H(+)(out). In terms of biological role, core subunit of the mitochondrial membrane respiratory chain NADH dehydrogenase (Complex I) that is believed to belong to the minimal assembly required for catalysis. Complex I functions in the transfer of electrons from NADH to the respiratory chain. The immediate electron acceptor for the enzyme is believed to be ubiquinone. May donate electrons to ubiquinone. In Solanum tuberosum (Potato), this protein is NADH dehydrogenase [ubiquinone] iron-sulfur protein 8, mitochondrial.